Reading from the N-terminus, the 316-residue chain is Probable peptidyl-tRNA hydrolase 2 (316 aa).

The interval 1 to 127 (MSENIPDIDP…SHPVDPQEPN (127 aa)) is disordered. A compositionally biased stretch (polar residues) spans 44–53 (PTPSSVTVDN). A compositionally biased stretch (low complexity) spans 75–89 (IPEVPIPSSAISISS). One can recognise a UBA domain in the interval 128 to 169 (EVNNEYLAHLLDLGFDEYTAVLALKRTNSAGVEQAVAWIVER). The disordered stretch occupies residues 170-193 (SNESDFDEDSSSSENEADEEMGAV). The span at 173–190 (SDFDEDSSSSENEADEEM) shows a compositional bias: acidic residues.

This sequence belongs to the PTH2 family.

It catalyses the reaction an N-acyl-L-alpha-aminoacyl-tRNA + H2O = an N-acyl-L-amino acid + a tRNA + H(+). Functionally, the natural substrate for this enzyme may be peptidyl-tRNAs which drop off the ribosome during protein synthesis. In Caenorhabditis elegans, this protein is Probable peptidyl-tRNA hydrolase 2.